We begin with the raw amino-acid sequence, 275 residues long: Phosphate import ATP-binding protein PstB 3 (275 aa).

The disordered stretch occupies residues 1-26; it reads MATQETDDSLISTDVQTDATERGDQP. The segment covering 9–18 has biased composition (polar residues); that stretch reads SLISTDVQTD. The region spanning 31–270 is the ABC transporter domain; the sequence is VETKHLDVHY…PEDDRVEDYI (240 aa). 63–70 is an ATP binding site; that stretch reads GPSGCGKS.

The protein belongs to the ABC transporter superfamily. Phosphate importer (TC 3.A.1.7) family. In terms of assembly, the complex is composed of two ATP-binding proteins (PstB), two transmembrane proteins (PstC and PstA) and a solute-binding protein (PstS).

It localises to the cell membrane. The catalysed reaction is phosphate(out) + ATP + H2O = ADP + 2 phosphate(in) + H(+). In terms of biological role, part of the ABC transporter complex PstSACB involved in phosphate import. Responsible for energy coupling to the transport system. This is Phosphate import ATP-binding protein PstB 3 from Natronomonas pharaonis (strain ATCC 35678 / DSM 2160 / CIP 103997 / JCM 8858 / NBRC 14720 / NCIMB 2260 / Gabara) (Halobacterium pharaonis).